We begin with the raw amino-acid sequence, 260 residues long: Alpha-acetolactate decarboxylase (260 aa).

Belongs to the alpha-acetolactate decarboxylase family.

It carries out the reaction (2S)-2-acetolactate + H(+) = (R)-acetoin + CO2. Its pathway is polyol metabolism; (R,R)-butane-2,3-diol biosynthesis; (R,R)-butane-2,3-diol from pyruvate: step 2/3. In terms of biological role, converts acetolactate into acetoin, which can be excreted by the cells. This may be a mechanism for controlling the internal pH of cells in the stationary stage. This Klebsiella aerogenes (Enterobacter aerogenes) protein is Alpha-acetolactate decarboxylase (budA).